A 639-amino-acid chain; its full sequence is 1-deoxy-D-xylulose-5-phosphate synthase (639 aa).

Thiamine diphosphate contacts are provided by residues H79 and 120-122 (AHS). Residue D151 participates in Mg(2+) binding. Thiamine diphosphate contacts are provided by residues 152–153 (GA), N180, Y289, and E371. A Mg(2+)-binding site is contributed by N180.

This sequence belongs to the transketolase family. DXPS subfamily. As to quaternary structure, homodimer. Requires Mg(2+) as cofactor. Thiamine diphosphate serves as cofactor.

It catalyses the reaction D-glyceraldehyde 3-phosphate + pyruvate + H(+) = 1-deoxy-D-xylulose 5-phosphate + CO2. Its pathway is metabolic intermediate biosynthesis; 1-deoxy-D-xylulose 5-phosphate biosynthesis; 1-deoxy-D-xylulose 5-phosphate from D-glyceraldehyde 3-phosphate and pyruvate: step 1/1. Catalyzes the acyloin condensation reaction between C atoms 2 and 3 of pyruvate and glyceraldehyde 3-phosphate to yield 1-deoxy-D-xylulose-5-phosphate (DXP). The protein is 1-deoxy-D-xylulose-5-phosphate synthase of Allorhizobium ampelinum (strain ATCC BAA-846 / DSM 112012 / S4) (Agrobacterium vitis (strain S4)).